A 432-amino-acid chain; its full sequence is Enolase 2 (432 aa).

Q163 serves as a coordination point for (2R)-2-phosphoglycerate. E205 functions as the Proton donor in the catalytic mechanism. Mg(2+) contacts are provided by D242, E287, and D314. Positions 339, 368, 369, and 390 each coordinate (2R)-2-phosphoglycerate. K339 (proton acceptor) is an active-site residue.

It belongs to the enolase family. As to quaternary structure, homodimer. Probably forms octamers. Mg(2+) is required as a cofactor.

It is found in the cytoplasm. The protein localises to the secreted. Its subcellular location is the cell surface. It carries out the reaction (2R)-2-phosphoglycerate = phosphoenolpyruvate + H2O. The protein operates within carbohydrate degradation; glycolysis; pyruvate from D-glyceraldehyde 3-phosphate: step 4/5. Catalyzes the reversible conversion of 2-phosphoglycerate (2-PG) into phosphoenolpyruvate (PEP). It is essential for the degradation of carbohydrates via glycolysis. The sequence is that of Enolase 2 from Lactobacillus gasseri (strain ATCC 33323 / DSM 20243 / BCRC 14619 / CIP 102991 / JCM 1131 / KCTC 3163 / NCIMB 11718 / NCTC 13722 / AM63).